The chain runs to 171 residues: Xanthine-guanine phosphoribosyltransferase (171 aa).

5-phospho-alpha-D-ribose 1-diphosphate-binding positions include 51 to 52 and 106 to 114; these read RG and DDLVDSGKT. Mg(2+) is bound at residue Asp-107. The guanine site is built by Asp-110 and Ile-153. 2 residues coordinate xanthine: Asp-110 and Ile-153. Residues 110–114 and 152–153 contribute to the GMP site; these read DSGKT and WI.

This sequence belongs to the purine/pyrimidine phosphoribosyltransferase family. XGPT subfamily. Homotetramer. Requires Mg(2+) as cofactor.

It localises to the cell inner membrane. The catalysed reaction is GMP + diphosphate = guanine + 5-phospho-alpha-D-ribose 1-diphosphate. It catalyses the reaction XMP + diphosphate = xanthine + 5-phospho-alpha-D-ribose 1-diphosphate. It carries out the reaction IMP + diphosphate = hypoxanthine + 5-phospho-alpha-D-ribose 1-diphosphate. It functions in the pathway purine metabolism; GMP biosynthesis via salvage pathway; GMP from guanine: step 1/1. The protein operates within purine metabolism; XMP biosynthesis via salvage pathway; XMP from xanthine: step 1/1. Purine salvage pathway enzyme that catalyzes the transfer of the ribosyl-5-phosphate group from 5-phospho-alpha-D-ribose 1-diphosphate (PRPP) to the N9 position of the 6-oxopurines guanine and xanthine to form the corresponding ribonucleotides GMP (guanosine 5'-monophosphate) and XMP (xanthosine 5'-monophosphate), with the release of PPi. To a lesser extent, also acts on hypoxanthine. This chain is Xanthine-guanine phosphoribosyltransferase, found in Ruegeria pomeroyi (strain ATCC 700808 / DSM 15171 / DSS-3) (Silicibacter pomeroyi).